A 361-amino-acid chain; its full sequence is Holliday junction branch migration complex subunit RuvB (361 aa).

Residues 1-181 (MKDQRLLDSV…FGIPIRLNFY (181 aa)) are large ATPase domain (RuvB-L). Residues Leu20, Arg21, Gly62, Lys65, Thr66, Thr67, 128–130 (EDY), Arg171, Tyr181, and Arg218 each bind ATP. Residue Thr66 participates in Mg(2+) binding. A small ATPAse domain (RuvB-S) region spans residues 182 to 252 (TIEELEYIVQ…VADEALSRLE (71 aa)). Residues 255–361 (HLGLDPLDRR…QTTLWDEADE (107 aa)) are head domain (RuvB-H). The DNA site is built by Arg291, Arg310, and Arg315.

This sequence belongs to the RuvB family. As to quaternary structure, homohexamer. Forms an RuvA(8)-RuvB(12)-Holliday junction (HJ) complex. HJ DNA is sandwiched between 2 RuvA tetramers; dsDNA enters through RuvA and exits via RuvB. An RuvB hexamer assembles on each DNA strand where it exits the tetramer. Each RuvB hexamer is contacted by two RuvA subunits (via domain III) on 2 adjacent RuvB subunits; this complex drives branch migration. In the full resolvosome a probable DNA-RuvA(4)-RuvB(12)-RuvC(2) complex forms which resolves the HJ.

The protein resides in the cytoplasm. It carries out the reaction ATP + H2O = ADP + phosphate + H(+). The RuvA-RuvB-RuvC complex processes Holliday junction (HJ) DNA during genetic recombination and DNA repair, while the RuvA-RuvB complex plays an important role in the rescue of blocked DNA replication forks via replication fork reversal (RFR). RuvA specifically binds to HJ cruciform DNA, conferring on it an open structure. The RuvB hexamer acts as an ATP-dependent pump, pulling dsDNA into and through the RuvAB complex. RuvB forms 2 homohexamers on either side of HJ DNA bound by 1 or 2 RuvA tetramers; 4 subunits per hexamer contact DNA at a time. Coordinated motions by a converter formed by DNA-disengaged RuvB subunits stimulates ATP hydrolysis and nucleotide exchange. Immobilization of the converter enables RuvB to convert the ATP-contained energy into a lever motion, pulling 2 nucleotides of DNA out of the RuvA tetramer per ATP hydrolyzed, thus driving DNA branch migration. The RuvB motors rotate together with the DNA substrate, which together with the progressing nucleotide cycle form the mechanistic basis for DNA recombination by continuous HJ branch migration. Branch migration allows RuvC to scan DNA until it finds its consensus sequence, where it cleaves and resolves cruciform DNA. The chain is Holliday junction branch migration complex subunit RuvB from Bartonella quintana (strain Toulouse) (Rochalimaea quintana).